We begin with the raw amino-acid sequence, 77 residues long: Translation initiation factor IF-1, chloroplastic (77 aa).

Residues 1–72 (MKKQNLIEME…TKGRITYRLR (72 aa)) form the S1-like domain.

The protein belongs to the IF-1 family. In terms of assembly, component of the 30S ribosomal translation pre-initiation complex which assembles on the 30S ribosome in the order IF-2 and IF-3, IF-1 and N-formylmethionyl-tRNA(fMet); mRNA recruitment can occur at any time during PIC assembly.

The protein localises to the plastid. Its subcellular location is the chloroplast. Functionally, one of the essential components for the initiation of protein synthesis. Stabilizes the binding of IF-2 and IF-3 on the 30S subunit to which N-formylmethionyl-tRNA(fMet) subsequently binds. Helps modulate mRNA selection, yielding the 30S pre-initiation complex (PIC). Upon addition of the 50S ribosomal subunit IF-1, IF-2 and IF-3 are released leaving the mature 70S translation initiation complex. This is Translation initiation factor IF-1, chloroplastic from Zygnema circumcarinatum (Green alga).